We begin with the raw amino-acid sequence, 531 residues long: Polyamine aminopropyltransferase 1 (531 aa).

A run of 7 helical transmembrane segments spans residues 27–47, 59–79, 96–116, 122–142, 160–180, 188–208, and 218–238; these read FLLL…ELAL, VLQT…GSLA, GVLA…FAWL, AMIV…PLLM, MFAV…LFLL, GALV…VFIF, and AGLL…YVLA. Residues 205-476 are spermidine synthase; that stretch reads VFIFRRQTGR…VLARPGTEAP (272 aa). A PABS domain is found at 233–471; that stretch reads TTYVLADDLE…GNWGFVLARP (239 aa). Gln-263 is a binding site for S-methyl-5'-thioadenosine. 2 residues coordinate spermidine: His-298 and Asp-320. Residues Glu-340 and 374 to 375 contribute to the S-methyl-5'-thioadenosine site; that span reads DA. Asp-392 functions as the Proton acceptor in the catalytic mechanism.

This sequence belongs to the spermidine/spermine synthase family. Homodimer or homotetramer.

It localises to the cell membrane. It catalyses the reaction S-adenosyl 3-(methylsulfanyl)propylamine + putrescine = S-methyl-5'-thioadenosine + spermidine + H(+). Its pathway is amine and polyamine biosynthesis; spermidine biosynthesis; spermidine from putrescine: step 1/1. Catalyzes the irreversible transfer of a propylamine group from the amino donor S-adenosylmethioninamine (decarboxy-AdoMet) to putrescine (1,4-diaminobutane) to yield spermidine. The protein is Polyamine aminopropyltransferase 1 of Streptomyces coelicolor (strain ATCC BAA-471 / A3(2) / M145).